The sequence spans 1368 residues: DNA-directed RNA polymerase subunit beta (1368 aa).

This sequence belongs to the RNA polymerase beta chain family. The RNAP catalytic core consists of 2 alpha, 1 beta, 1 beta' and 1 omega subunit. When a sigma factor is associated with the core the holoenzyme is formed, which can initiate transcription.

The enzyme catalyses RNA(n) + a ribonucleoside 5'-triphosphate = RNA(n+1) + diphosphate. Its function is as follows. DNA-dependent RNA polymerase catalyzes the transcription of DNA into RNA using the four ribonucleoside triphosphates as substrates. The chain is DNA-directed RNA polymerase subunit beta from Paraburkholderia xenovorans (strain LB400).